The following is a 193-amino-acid chain: Ribonuclease HII (193 aa).

The region spanning 15-193 (CIVAGIDEAG…PYHRRSFRCC (179 aa)) is the RNase H type-2 domain. Positions 21, 22, and 112 each coordinate a divalent metal cation.

Belongs to the RNase HII family. Mn(2+) serves as cofactor. It depends on Mg(2+) as a cofactor.

It is found in the cytoplasm. The enzyme catalyses Endonucleolytic cleavage to 5'-phosphomonoester.. In terms of biological role, endonuclease that specifically degrades the RNA of RNA-DNA hybrids. The sequence is that of Ribonuclease HII from Rickettsia conorii (strain ATCC VR-613 / Malish 7).